The primary structure comprises 347 residues: Dihydroorotase (347 aa).

2 residues coordinate Zn(2+): His17 and His19. Residues 19 to 21 (HLR) and Asn45 each bind substrate. Residues Lys103, His140, and His178 each contribute to the Zn(2+) site. The residue at position 103 (Lys103) is an N6-carboxylysine. Residue His140 participates in substrate binding. Leu223 is a substrate binding site. Asp251 serves as a coordination point for Zn(2+). Asp251 is a catalytic residue. His255 and Ala267 together coordinate substrate.

It belongs to the metallo-dependent hydrolases superfamily. DHOase family. Class II DHOase subfamily. Homodimer. Zn(2+) is required as a cofactor.

It catalyses the reaction (S)-dihydroorotate + H2O = N-carbamoyl-L-aspartate + H(+). Its pathway is pyrimidine metabolism; UMP biosynthesis via de novo pathway; (S)-dihydroorotate from bicarbonate: step 3/3. Functionally, catalyzes the reversible cyclization of carbamoyl aspartate to dihydroorotate. The chain is Dihydroorotase from Pectobacterium carotovorum subsp. carotovorum (strain PC1).